A 77-amino-acid chain; its full sequence is Large ribosomal subunit protein eL20 (77 aa).

This sequence belongs to the eukaryotic ribosomal protein eL20 family. As to quaternary structure, part of the 50S ribosomal subunit. Binds 23S rRNA.

This chain is Large ribosomal subunit protein eL20, found in Thermococcus gammatolerans (strain DSM 15229 / JCM 11827 / EJ3).